The primary structure comprises 208 residues: Flavin-dependent thymidylate synthase (208 aa).

One can recognise a ThyX domain in the interval 1–208; that stretch reads MEVICKHYTP…QYLFEDCLKH (208 aa). Residues Ser-50 and 74-76 contribute to the FAD site; that span reads RHR. DUMP contacts are provided by residues 71–74, 84–86, and Lys-147; these read ELSR and SSR. The ThyX motif motif lies at 74–84; it reads RHRIASLSVKS. FAD is bound by residues 163-165 and Asn-169; that span reads NAR. Arg-174 provides a ligand contact to dUMP. Catalysis depends on Arg-174, which acts as the Involved in ionization of N3 of dUMP, leading to its activation.

The protein belongs to the thymidylate synthase ThyX family. As to quaternary structure, homotetramer. FAD is required as a cofactor.

The enzyme catalyses dUMP + (6R)-5,10-methylene-5,6,7,8-tetrahydrofolate + NADPH + H(+) = dTMP + (6S)-5,6,7,8-tetrahydrofolate + NADP(+). The protein operates within pyrimidine metabolism; dTTP biosynthesis. Functionally, catalyzes the reductive methylation of 2'-deoxyuridine-5'-monophosphate (dUMP) to 2'-deoxythymidine-5'-monophosphate (dTMP) while utilizing 5,10-methylenetetrahydrofolate (mTHF) as the methyl donor, and NADPH and FADH(2) as the reductant. This Helicobacter pylori (strain J99 / ATCC 700824) (Campylobacter pylori J99) protein is Flavin-dependent thymidylate synthase.